The chain runs to 271 residues: Formamidopyrimidine-DNA glycosylase (271 aa).

Pro2 functions as the Schiff-base intermediate with DNA in the catalytic mechanism. Glu3 functions as the Proton donor in the catalytic mechanism. The Proton donor; for beta-elimination activity role is filled by Lys57. DNA is bound by residues His90, Arg109, and Lys151. The FPG-type zinc-finger motif lies at 236 to 270 (HVYGRGGETCTQCGNLLSEIRLGQRTTVFCGICQT). Arg260 acts as the Proton donor; for delta-elimination activity in catalysis.

The protein belongs to the FPG family. As to quaternary structure, monomer. Zn(2+) is required as a cofactor.

The catalysed reaction is Hydrolysis of DNA containing ring-opened 7-methylguanine residues, releasing 2,6-diamino-4-hydroxy-5-(N-methyl)formamidopyrimidine.. The enzyme catalyses 2'-deoxyribonucleotide-(2'-deoxyribose 5'-phosphate)-2'-deoxyribonucleotide-DNA = a 3'-end 2'-deoxyribonucleotide-(2,3-dehydro-2,3-deoxyribose 5'-phosphate)-DNA + a 5'-end 5'-phospho-2'-deoxyribonucleoside-DNA + H(+). Functionally, involved in base excision repair of DNA damaged by oxidation or by mutagenic agents. Acts as a DNA glycosylase that recognizes and removes damaged bases. Has a preference for oxidized purines, such as 7,8-dihydro-8-oxoguanine (8-oxoG). Has AP (apurinic/apyrimidinic) lyase activity and introduces nicks in the DNA strand. Cleaves the DNA backbone by beta-delta elimination to generate a single-strand break at the site of the removed base with both 3'- and 5'-phosphates. This Shewanella sp. (strain MR-4) protein is Formamidopyrimidine-DNA glycosylase.